The following is a 490-amino-acid chain: Glutamate--tRNA ligase (490 aa).

The 'HIGH' region signature appears at Pro-9–Gly-19. A 'KMSKS' region motif is present at residues Lys-251–Arg-255. Lys-254 is a binding site for ATP.

The protein belongs to the class-I aminoacyl-tRNA synthetase family. Glutamate--tRNA ligase type 1 subfamily. As to quaternary structure, monomer.

Its subcellular location is the cytoplasm. The catalysed reaction is tRNA(Glu) + L-glutamate + ATP = L-glutamyl-tRNA(Glu) + AMP + diphosphate. Catalyzes the attachment of glutamate to tRNA(Glu) in a two-step reaction: glutamate is first activated by ATP to form Glu-AMP and then transferred to the acceptor end of tRNA(Glu). The sequence is that of Glutamate--tRNA ligase from Borreliella burgdorferi (strain ATCC 35210 / DSM 4680 / CIP 102532 / B31) (Borrelia burgdorferi).